The following is a 332-amino-acid chain: MSKLPLLPTTVIGSYPRPKWLRESIRLHKAGKMSNEDLQEAFNDAVIAVFQDHYKAGVDVPTDGEVRRDEMVEFFAERIKGFKFYGPVRVWGTAYYRKPSVVSKIEYREPMLVDEFTFAKSVSYTDNLKITITGPYTIAEWSYNEYYRNKKDLVFDLAKAINQEIKNLVEAGAKIIQIDEPALHTRKEDVSWGVEAVNEAVKGVNAKLVMHICYGDYSFVAPYFNEIKVDQINFALKIYNYKPLELLKKYGFDKELGAGVVDVHNRKVETSEEVANDIRKILEYFPPEKVWINPDCGLKLLSRKIAYQKLVSMVEGTKVVREELKRKGYSVD.

The Zn(2+) site is built by H211, C213, and C296.

It belongs to the archaeal MetE family. Zn(2+) is required as a cofactor.

Its pathway is amino-acid biosynthesis; L-methionine biosynthesis via de novo pathway. Catalyzes the transfer of a methyl group to L-homocysteine resulting in methionine formation. The physiological methyl donor is unknown. This Saccharolobus solfataricus (strain ATCC 35092 / DSM 1617 / JCM 11322 / P2) (Sulfolobus solfataricus) protein is Methionine synthase.